Reading from the N-terminus, the 540-residue chain is Telomerase Cajal body protein 1 (540 aa).

A compositionally biased stretch (pro residues) spans 1–10 (MKTPEAPPLA). The tract at residues 1–126 (MKTPEAPPLA…GEDVEGVSEE (126 aa)) is disordered. 6 positions are modified to phosphoserine: serine 26, serine 30, serine 54, serine 64, serine 85, and serine 90. Positions 116-126 (PGEDVEGVSEE) are enriched in acidic residues. WD repeat units follow at residues 158–197 (QPEN…YNEG), 213–258 (EGDT…LRAS), 263–304 (NHLD…RDCE), 314–355 (GQSG…ALLG), 356–396 (GHQG…HPLW), and 402–441 (VTTN…LESK). Threonine 480 carries the phosphothreonine modification. Serine 482 carries the post-translational modification Phosphoserine. Residues 520 to 540 (SDAHQEEMGQGRTEGGGGEFT) are disordered. A compositionally biased stretch (gly residues) spans 531-540 (RTEGGGGEFT).

This sequence belongs to the TCAB1 family. In terms of assembly, component of the telomerase holoenzyme complex composed of one molecule of TERT, one molecule of WRAP53/TCAB1, two molecules of H/ACA ribonucleoprotein complex subunits DKC1, NOP10, NHP2 and GAR1, and a telomerase RNA template component (TERC). The telomerase holoenzyme complex is associated with TEP1, SMG6/EST1A and POT1. Interacts with the chaperonin-containing T-complex (TRiC) complex; which mediates the folding of WRAP53/TCAB1. Interacts with COIL. Interacts with SMN1. Interacts with RNF8. Interacts with histone H2AX. Post-translationally, phosphorylated at Ser-64 by ATM in response to DNA damage, promoting its interaction with histone H2AX and localization to sites of DNA double-strand breaks.

The protein localises to the nucleus. The protein resides in the cajal body. It localises to the chromosome. Its subcellular location is the telomere. Its function is as follows. RNA chaperone that plays a key role in telomere maintenance and RNA localization to Cajal bodies. Specifically recognizes and binds the Cajal body box (CAB box) present in both small Cajal body RNAs (scaRNAs) and telomerase RNA template component (TERC). Essential component of the telomerase holoenzyme complex, a ribonucleoprotein complex essential for the replication of chromosome termini that elongates telomeres in most eukaryotes. In the telomerase holoenzyme complex, required to stimulate the catalytic activity of the complex. Acts by specifically binding the CAB box of the TERC RNA and controlling the folding of the CR4/CR5 region of the TERC RNA, a critical step for telomerase activity. In addition, also controls telomerase holoenzyme complex localization to Cajal body. During S phase, required for delivery of TERC to telomeres during S phase and for telomerase activity. In addition to its role in telomere maintenance, also required for Cajal body formation, probably by mediating localization of scaRNAs to Cajal bodies. Also plays a role in DNA repair: phosphorylated by ATM in response to DNA damage and relocalizes to sites of DNA double-strand breaks to promote the repair of DNA double-strand breaks. Acts by recruiting the ubiquitin ligase RNF8 to DNA breaks and promote both homologous recombination (HR) and non-homologous end joining (NHEJ). The protein is Telomerase Cajal body protein 1 of Bos taurus (Bovine).